Here is a 605-residue protein sequence, read N- to C-terminus: UvrABC system protein C (605 aa).

The 78-residue stretch at 15 to 92 folds into the GIY-YIG domain; sequence GLPGCYLMKN…IQKHQPYFNI (78 aa). Positions 197–232 constitute a UVR domain; sequence GHAKKDLTQRMEKAAADMAYERAGDLRDQIRYIEAT.

This sequence belongs to the UvrC family. As to quaternary structure, interacts with UvrB in an incision complex.

The protein localises to the cytoplasm. The UvrABC repair system catalyzes the recognition and processing of DNA lesions. UvrC both incises the 5' and 3' sides of the lesion. The N-terminal half is responsible for the 3' incision and the C-terminal half is responsible for the 5' incision. In Levilactobacillus brevis (strain ATCC 367 / BCRC 12310 / CIP 105137 / JCM 1170 / LMG 11437 / NCIMB 947 / NCTC 947) (Lactobacillus brevis), this protein is UvrABC system protein C.